The primary structure comprises 217 residues: Probable transaldolase (217 aa).

Lys83 functions as the Schiff-base intermediate with substrate in the catalytic mechanism.

This sequence belongs to the transaldolase family. Type 3B subfamily.

It localises to the cytoplasm. The enzyme catalyses D-sedoheptulose 7-phosphate + D-glyceraldehyde 3-phosphate = D-erythrose 4-phosphate + beta-D-fructose 6-phosphate. It participates in carbohydrate degradation; pentose phosphate pathway; D-glyceraldehyde 3-phosphate and beta-D-fructose 6-phosphate from D-ribose 5-phosphate and D-xylulose 5-phosphate (non-oxidative stage): step 2/3. In terms of biological role, transaldolase is important for the balance of metabolites in the pentose-phosphate pathway. This Ruegeria pomeroyi (strain ATCC 700808 / DSM 15171 / DSS-3) (Silicibacter pomeroyi) protein is Probable transaldolase.